The following is a 655-amino-acid chain: uncharacterized protein (655 aa).

Positions 245–469 (PGVIAQALFT…NLKVIVNLGY (225 aa)) constitute a PE-PPE domain.

Belongs to the mycobacterial PPE family.

This is an uncharacterized protein from Mycobacterium tuberculosis (strain ATCC 25618 / H37Rv).